The sequence spans 322 residues: uncharacterized protein (322 aa).

Composition is skewed to basic residues over residues 1–16 (MPGN…KSGT) and 43–61 (LRPH…RRPV). Positions 1-69 (MPGNSRRRGA…PVKRADETET (69 aa)) are disordered. Gly-261, Ile-281, and Leu-290 together coordinate S-adenosyl-L-methionine.

Belongs to the class IV-like SAM-binding methyltransferase superfamily. RNA methyltransferase TrmH family.

This is an uncharacterized protein from Mycobacterium tuberculosis (strain CDC 1551 / Oshkosh).